The sequence spans 231 residues: Red fluorescent protein eqFP611 (231 aa).

Positions 63–65 (MYG) form a cross-link, 2-iminomethyl-5-imidazolinone (Met-Gly). Tyr-64 carries the (E)-2,3-didehydrotyrosine modification.

This sequence belongs to the GFP family. In terms of assembly, monomer. Post-translationally, contains a chromophore consisting of modified amino acid residues. The chromophore is formed by autocatalytic backbone condensation between Xaa-N and Gly-(N+2), oxidation of Tyr-(N+1) to didehydrotyrosine, and formation of a double bond to the alpha-amino nitrogen of residue Xaa-N. Maturation of the chromophore requires nothing other than molecular oxygen.

In terms of biological role, pigment protein. The protein is Red fluorescent protein eqFP611 of Entacmaea quadricolor (Bubble-tip anemone).